The sequence spans 285 residues: Pantothenate synthetase (285 aa).

Met33 to His40 is a binding site for ATP. His40 serves as the catalytic Proton donor. Gln64 lines the (R)-pantoate pocket. Gln64 is a binding site for beta-alanine. Gly150 to Asp153 provides a ligand contact to ATP. Gln156 contacts (R)-pantoate. ATP contacts are provided by residues Ala179 and Leu187–Arg190.

It belongs to the pantothenate synthetase family. In terms of assembly, homodimer.

It localises to the cytoplasm. The catalysed reaction is (R)-pantoate + beta-alanine + ATP = (R)-pantothenate + AMP + diphosphate + H(+). It participates in cofactor biosynthesis; (R)-pantothenate biosynthesis; (R)-pantothenate from (R)-pantoate and beta-alanine: step 1/1. Functionally, catalyzes the condensation of pantoate with beta-alanine in an ATP-dependent reaction via a pantoyl-adenylate intermediate. The polypeptide is Pantothenate synthetase (Caulobacter vibrioides (strain ATCC 19089 / CIP 103742 / CB 15) (Caulobacter crescentus)).